Here is a 510-residue protein sequence, read N- to C-terminus: P-(S)-hydroxymandelonitrile lyase (510 aa).

An N-terminal signal peptide occupies residues 1–34; that stretch reads MAVFISSSGSPGRATATTTTTTTLLLAVLAAAAA. A substrate-binding site is contributed by 116 to 118; the sequence is NGG. 3 cysteine pairs are disulfide-bonded: Cys121/Cys377, Cys277/Cys289, and Cys313/Cys344. Asn172 carries N-linked (GlcNAc...) asparagine glycosylation. 212 to 213 serves as a coordination point for substrate; that stretch reads ES. Ser213 is a catalytic residue. Asn365 carries N-linked (GlcNAc...) asparagine glycosylation. Catalysis depends on residues Asp414 and His469. 465–469 contacts substrate; the sequence is SGAGH.

Belongs to the peptidase S10 family. In terms of assembly, heterotetramer of two A and two B chains. The A and B chains are linked by a disulfide bond. In terms of processing, the N-terminus of chain A is blocked. Primary leaves of seedlings.

It carries out the reaction (S)-4-hydroxymandelonitrile = 4-hydroxybenzaldehyde + hydrogen cyanide. In terms of biological role, involved in cyanogenesis, the release of HCN from injured tissues. Is involved in the catabolism of the cyanogenic glycoside dhurrin. The polypeptide is P-(S)-hydroxymandelonitrile lyase (Sorghum bicolor (Sorghum)).